The chain runs to 381 residues: Queuine tRNA-ribosyltransferase (381 aa).

Residue D90 is the Proton acceptor of the active site. Substrate is bound by residues 90 to 94 (DSGGF), D144, Q193, and G221. Residues 252–258 (GVGTPEN) are RNA binding. D271 serves as the catalytic Nucleophile. Positions 276 to 280 (TRNAR) are RNA binding; important for wobble base 34 recognition. Zn(2+) contacts are provided by C309, C311, C314, and H340.

Belongs to the queuine tRNA-ribosyltransferase family. As to quaternary structure, homodimer. Within each dimer, one monomer is responsible for RNA recognition and catalysis, while the other monomer binds to the replacement base PreQ1. Zn(2+) is required as a cofactor.

The catalysed reaction is 7-aminomethyl-7-carbaguanine + guanosine(34) in tRNA = 7-aminomethyl-7-carbaguanosine(34) in tRNA + guanine. Its pathway is tRNA modification; tRNA-queuosine biosynthesis. In terms of biological role, catalyzes the base-exchange of a guanine (G) residue with the queuine precursor 7-aminomethyl-7-deazaguanine (PreQ1) at position 34 (anticodon wobble position) in tRNAs with GU(N) anticodons (tRNA-Asp, -Asn, -His and -Tyr). Catalysis occurs through a double-displacement mechanism. The nucleophile active site attacks the C1' of nucleotide 34 to detach the guanine base from the RNA, forming a covalent enzyme-RNA intermediate. The proton acceptor active site deprotonates the incoming PreQ1, allowing a nucleophilic attack on the C1' of the ribose to form the product. After dissociation, two additional enzymatic reactions on the tRNA convert PreQ1 to queuine (Q), resulting in the hypermodified nucleoside queuosine (7-(((4,5-cis-dihydroxy-2-cyclopenten-1-yl)amino)methyl)-7-deazaguanosine). The sequence is that of Queuine tRNA-ribosyltransferase from Helicobacter hepaticus (strain ATCC 51449 / 3B1).